A 359-amino-acid polypeptide reads, in one-letter code: Protein mab-21-like 2 (359 aa).

This sequence belongs to the mab-21 family.

Its subcellular location is the nucleus. It is found in the cytoplasm. Its function is as follows. Required for several aspects of embryonic development including normal development of the eye. This is Protein mab-21-like 2 (MAB21L2) from Homo sapiens (Human).